A 216-amino-acid polypeptide reads, in one-letter code: Thymidine kinase (216 aa).

ATP is bound by residues 9 to 16 (GTMDCGKS) and 86 to 89 (DEAQ). Glu87 serves as the catalytic Proton acceptor.

Belongs to the thymidine kinase family. In terms of assembly, homotetramer.

It is found in the cytoplasm. It carries out the reaction thymidine + ATP = dTMP + ADP + H(+). The polypeptide is Thymidine kinase (Streptomyces avermitilis (strain ATCC 31267 / DSM 46492 / JCM 5070 / NBRC 14893 / NCIMB 12804 / NRRL 8165 / MA-4680)).